The primary structure comprises 545 residues: Probable protein kinase UbiB (545 aa).

The Protein kinase domain maps to Asp123 to Leu501. Residues Leu129–Val137 and Lys152 each bind ATP. Catalysis depends on Asp287, which acts as the Proton acceptor. The helical transmembrane segment at Leu508–Ile528 threads the bilayer.

The protein belongs to the ABC1 family. UbiB subfamily.

It localises to the cell inner membrane. Its pathway is cofactor biosynthesis; ubiquinone biosynthesis [regulation]. Its function is as follows. Is probably a protein kinase regulator of UbiI activity which is involved in aerobic coenzyme Q (ubiquinone) biosynthesis. The protein is Probable protein kinase UbiB of Photorhabdus laumondii subsp. laumondii (strain DSM 15139 / CIP 105565 / TT01) (Photorhabdus luminescens subsp. laumondii).